We begin with the raw amino-acid sequence, 184 residues long: NEDD8-conjugating enzyme UBC12 (184 aa).

A disordered region spans residues 10–29 (EKQRQAAQAQAPAQGRSAAS). The span at 14–29 (QAAQAQAPAQGRSAAS) shows a compositional bias: low complexity. In terms of domain architecture, UBC core spans 30–174 (PAQLRVEKDL…VQATMMGGHL (145 aa)). The active-site Glycyl thioester intermediate is C112.

It belongs to the ubiquitin-conjugating enzyme family. UBC12 subfamily.

It carries out the reaction [E1 NEDD8-activating enzyme]-S-[NEDD8 protein]-yl-L-cysteine + [E2 NEDD8-conjugating enzyme]-L-cysteine = [E1 NEDD8-activating enzyme]-L-cysteine + [E2 NEDD8-conjugating enzyme]-S-[NEDD8-protein]-yl-L-cysteine.. It participates in protein modification; protein neddylation. Accepts the ubiquitin-like protein NEDD8/RUB1 from the UBA3-ULA1 E1 complex and catalyzes its covalent attachment to other proteins. This is NEDD8-conjugating enzyme UBC12 (UBC12) from Eremothecium gossypii (strain ATCC 10895 / CBS 109.51 / FGSC 9923 / NRRL Y-1056) (Yeast).